The sequence spans 266 residues: Glucosamine-6-phosphate deaminase (266 aa).

Asp-72 (proton acceptor; for enolization step) is an active-site residue. Residue Asp-141 is the For ring-opening step of the active site. His-143 functions as the Proton acceptor; for ring-opening step in the catalytic mechanism. Glu-148 serves as the catalytic For ring-opening step.

Belongs to the glucosamine/galactosamine-6-phosphate isomerase family. NagB subfamily. As to quaternary structure, homohexamer.

It catalyses the reaction alpha-D-glucosamine 6-phosphate + H2O = beta-D-fructose 6-phosphate + NH4(+). Its pathway is amino-sugar metabolism; N-acetylneuraminate degradation; D-fructose 6-phosphate from N-acetylneuraminate: step 5/5. Allosterically activated by N-acetylglucosamine 6-phosphate (GlcNAc6P). Catalyzes the reversible isomerization-deamination of glucosamine 6-phosphate (GlcN6P) to form fructose 6-phosphate (Fru6P) and ammonium ion. This chain is Glucosamine-6-phosphate deaminase, found in Aliivibrio fischeri (strain ATCC 700601 / ES114) (Vibrio fischeri).